The primary structure comprises 331 residues: CRISPR-associated endonuclease Cas1 (331 aa).

3 residues coordinate Mn(2+): E166, H228, and D243.

The protein belongs to the CRISPR-associated endonuclease Cas1 family. Homodimer, forms a heterotetramer with a Cas2 homodimer. Mg(2+) is required as a cofactor. The cofactor is Mn(2+).

Functionally, CRISPR (clustered regularly interspaced short palindromic repeat), is an adaptive immune system that provides protection against mobile genetic elements (viruses, transposable elements and conjugative plasmids). CRISPR clusters contain spacers, sequences complementary to antecedent mobile elements, and target invading nucleic acids. CRISPR clusters are transcribed and processed into CRISPR RNA (crRNA). Acts as a dsDNA endonuclease. Involved in the integration of spacer DNA into the CRISPR cassette. This is CRISPR-associated endonuclease Cas1 from Hyperthermus butylicus (strain DSM 5456 / JCM 9403 / PLM1-5).